Consider the following 654-residue polypeptide: Peptide-N(4)-(N-acetyl-beta-glucosaminyl)asparagine amidase (654 aa).

Position 2 is an N-acetylalanine (alanine 2). The 62-residue stretch at 30–91 (EASKLLLTYA…EGETHLIFPK (62 aa)) folds into the PUB domain. The interval 112 to 163 (RLDGSNKSHKVKSSQQPAASTQLPTTPSSNPSGLNQHTRNRQGQSSDPPSAS) is disordered. A compositionally biased stretch (polar residues) spans 124-163 (SSQQPAASTQLPTTPSSNPSGLNQHTRNRQGQSSDPPSAS). Threonine 137 carries the post-translational modification Phosphothreonine. 4 residues coordinate Zn(2+): cysteine 250, cysteine 253, cysteine 283, and cysteine 286. Cysteine 309 acts as the Nucleophile in catalysis. Residues histidine 336 and aspartate 353 contribute to the active site. One can recognise a PAW domain in the interval 454 to 654 (ELGGRISGSV…LEIIIKFSDL (201 aa)).

The protein belongs to the transglutaminase-like superfamily. PNGase family. As to quaternary structure, component of a complex required to couple retrotranslocation, ubiquitination and deglycosylation composed of NGLY1, SAKS1, AMFR, VCP and RAD23B. Interacts with the proteasome components RAD23B and PSMC1. Interacts with directly with VCP. Interacts with DERL1, bringing it close to the endoplasmic reticulum membrane. Interacts with SAKS1. Zn(2+) is required as a cofactor.

The protein localises to the cytoplasm. It carries out the reaction Hydrolysis of an N(4)-(acetyl-beta-D-glucosaminyl)asparagine residue in which the glucosamine residue may be further glycosylated, to yield a (substituted) N-acetyl-beta-D-glucosaminylamine and a peptide containing an aspartate residue.. With respect to regulation, inhibited by Z-VAD-fmk, a well-known caspase inhibitor, which inhibits enzyme activity through covalent binding of the carbohydrate to the single Cys-306 residue. Functionally, specifically deglycosylates the denatured form of N-linked glycoproteins in the cytoplasm and assists their proteasome-mediated degradation. Cleaves the beta-aspartyl-glucosamine (GlcNAc) of the glycan and the amide side chain of Asn, converting Asn to Asp. Prefers proteins containing high-mannose over those bearing complex type oligosaccharides. Can recognize misfolded proteins in the endoplasmic reticulum that are exported to the cytosol to be destroyed and deglycosylate them, while it has no activity toward native proteins. Deglycosylation is a prerequisite for subsequent proteasome-mediated degradation of some, but not all, misfolded glycoproteins. The sequence is that of Peptide-N(4)-(N-acetyl-beta-glucosaminyl)asparagine amidase (NGLY1) from Homo sapiens (Human).